A 357-amino-acid polypeptide reads, in one-letter code: Beta-hexosaminidase (357 aa).

Substrate-binding positions include Asp-72, Arg-80, Arg-146, and 176–177 (KH). The Proton donor/acceptor role is filled by His-189. The active-site Nucleophile is Asp-260.

Belongs to the glycosyl hydrolase 3 family. NagZ subfamily.

The protein localises to the cytoplasm. The catalysed reaction is Hydrolysis of terminal non-reducing N-acetyl-D-hexosamine residues in N-acetyl-beta-D-hexosaminides.. It participates in cell wall biogenesis; peptidoglycan recycling. Plays a role in peptidoglycan recycling by cleaving the terminal beta-1,4-linked N-acetylglucosamine (GlcNAc) from peptide-linked peptidoglycan fragments, giving rise to free GlcNAc, anhydro-N-acetylmuramic acid and anhydro-N-acetylmuramic acid-linked peptides. The chain is Beta-hexosaminidase from Hydrogenovibrio crunogenus (strain DSM 25203 / XCL-2) (Thiomicrospira crunogena).